The sequence spans 249 residues: tRNA pseudouridine synthase A (249 aa).

The Nucleophile role is filled by Asp-52. Position 111 (Tyr-111) interacts with substrate.

It belongs to the tRNA pseudouridine synthase TruA family. In terms of assembly, homodimer.

It carries out the reaction uridine(38/39/40) in tRNA = pseudouridine(38/39/40) in tRNA. Formation of pseudouridine at positions 38, 39 and 40 in the anticodon stem and loop of transfer RNAs. The polypeptide is tRNA pseudouridine synthase A (Caulobacter sp. (strain K31)).